The chain runs to 177 residues: Large ribosomal subunit protein uL6 (177 aa).

This sequence belongs to the universal ribosomal protein uL6 family. As to quaternary structure, part of the 50S ribosomal subunit.

Functionally, this protein binds to the 23S rRNA, and is important in its secondary structure. It is located near the subunit interface in the base of the L7/L12 stalk, and near the tRNA binding site of the peptidyltransferase center. The polypeptide is Large ribosomal subunit protein uL6 (Pseudomonas fluorescens (strain SBW25)).